The chain runs to 181 residues: Large ribosomal subunit protein uL5 (181 aa).

Belongs to the universal ribosomal protein uL5 family. In terms of assembly, part of the 50S ribosomal subunit; part of the 5S rRNA/L5/L18/L25 subcomplex. Contacts the 5S rRNA and the P site tRNA. Forms a bridge to the 30S subunit in the 70S ribosome.

Functionally, this is one of the proteins that bind and probably mediate the attachment of the 5S RNA into the large ribosomal subunit, where it forms part of the central protuberance. In the 70S ribosome it contacts protein S13 of the 30S subunit (bridge B1b), connecting the 2 subunits; this bridge is implicated in subunit movement. Contacts the P site tRNA; the 5S rRNA and some of its associated proteins might help stabilize positioning of ribosome-bound tRNAs. The polypeptide is Large ribosomal subunit protein uL5 (Sulfurovum sp. (strain NBC37-1)).